Here is a 193-residue protein sequence, read N- to C-terminus: Zinc finger protein 740 (193 aa).

The interval 33-75 (SKQAENGERAGSPDVLRCSSQGHRKDSDKSRSRKDDDSLSEAS) is disordered. K34 is covalently cross-linked (Glycyl lysine isopeptide (Lys-Gly) (interchain with G-Cter in SUMO2)). At S44 the chain carries Phosphoserine. The segment covering 55–69 (HRKDSDKSRSRKDDD) has biased composition (basic and acidic residues). 2 consecutive C2H2-type zinc fingers follow at residues 101–123 (FVCEHCFGAFRSSYHLKRHILIH) and 129–151 (FECDICDMRFIQKYHLERHKRVH). The C2H2-type 3; atypical zinc finger occupies 157 to 179 (YQCERCHQCFSRTDRLLRHKRMC).

Belongs to the krueppel C2H2-type zinc-finger protein family.

Its subcellular location is the nucleus. In terms of biological role, may be involved in transcriptional regulation. The sequence is that of Zinc finger protein 740 (ZNF740) from Homo sapiens (Human).